Reading from the N-terminus, the 297-residue chain is Formylmethanofuran--tetrahydromethanopterin formyltransferase (297 aa).

The protein belongs to the FTR family. In terms of assembly, homotetramer.

The protein localises to the cytoplasm. It catalyses the reaction N-formylmethanofuran + 5,6,7,8-tetrahydromethanopterin + H(+) = N(5)-formyl-5,6,7,8-tetrahydromethanopterin + methanofuran. Its pathway is one-carbon metabolism; methanogenesis from CO(2); 5,10-methenyl-5,6,7,8-tetrahydromethanopterin from CO(2): step 2/3. Its function is as follows. Catalyzes the reversible transfer of a formyl group from formylmethanofuran (formyl-MFR) to tetrahydromethanopterin (H(4)MPT) to produce 5-formyl tetrahydromethanopterin (5-formyl-H(4)MPT) and methanofuran (MFR). The chain is Formylmethanofuran--tetrahydromethanopterin formyltransferase from Methanococcoides burtonii (strain DSM 6242 / NBRC 107633 / OCM 468 / ACE-M).